The following is an 810-amino-acid chain: F-BAR domain only protein 2 (810 aa).

An F-BAR domain is found at 3 to 250 (MAYFVENFWG…NMANTTVESL (248 aa)). The segment at 3–274 (MAYFVENFWG…PGLIEFEECD (272 aa)) is mediates dimerization and binding to membranes enriched in Pi(4,5)-P2 and induces their tubulation. Positions 87-156 (HLDLVRKLQE…CVEQERLKKE (70 aa)) form a coiled coil. K297 participates in a covalent cross-link: Glycyl lysine isopeptide (Lys-Gly) (interchain with G-Cter in SUMO2). Positions 301–352 (DAESVECPDADSLNIPDVDEEGYSIKPETNQNDTKENHFYSSSDSDSEDEEP) are disordered. S312 carries the phosphoserine modification. T385 is modified (phosphothreonine). A phosphoserine mark is found at S387, S394, and S403. Residues 403 to 537 (SNEELTKSKP…VSRGPSPVSL (135 aa)) form a disordered region. Low complexity predominate over residues 433–456 (PSLDSSSSSSLTSSSSARPTTPLS). Residues S488, S493, S496, S508, S510, S511, and S533 each carry the phosphoserine modification. The span at 502–521 (PLARAESSSSISSSASLSAA) shows a compositional bias: low complexity. A mediates interaction with DAB2, EPS15, EPS15R and ITSN1 region spans residues 521 to 810 (ANTPTVGVSR…FATGRYLADC (290 aa)). The MHD domain occupies 542–809 (TLPVAVALTE…RFATGRYLAD (268 aa)).

This sequence belongs to the FCHO family. As to quaternary structure, homodimer; disulfide-linked. May form homotetramer. Interacts with AP2A1. Interacts with EPS15, EPS15R, ITSN1 and ITSN2; recruit those scaffolding proteins which in turn may interact with the adaptor protein complex AP-2 at the plasma membrane. Interacts with DAB2 (via DPF motifs); mediates LDL receptor/LDLR endocytosis. Ubiquitinated. Mainly undergoes monoubiquitination but also polyubiquitination.

Its subcellular location is the membrane. The protein localises to the clathrin-coated pit. Functionally, functions in an early step of clathrin-mediated endocytosis. Has both a membrane binding/bending activity and the ability to recruit proteins essential to the formation of functional clathrin-coated pits. Has a lipid-binding activity with a preference for membranes enriched in phosphatidylserine and phosphoinositides (Pi(4,5) biphosphate) like the plasma membrane. Its membrane-bending activity might be important for the subsequent action of clathrin and adaptors in the formation of clathrin-coated vesicles. Involved in adaptor protein complex AP-2-dependent endocytosis of the transferrin receptor, it also functions in the AP-2-independent endocytosis of the LDL receptor. This Pongo abelii (Sumatran orangutan) protein is F-BAR domain only protein 2 (FCHO2).